The sequence spans 190 residues: MKLIIGLGNPGTEYDGTRHNIGFAVADALAAHHNASFSKEKGRYLSAKIKLGSESVGIIKPMTYMNHSGHAVVAAMNFYKVARTEIVVICDDLNLPVGTMRLRPKGSAGGQNGLKHIIECFGSNEFARLRIGIGSQNMPKGGFSSFVLGKFSEQEKSEIAIMTVSARDCAIDFALHGLGHAMNHFNTSKL.

Y14 provides a ligand contact to tRNA. Catalysis depends on H19, which acts as the Proton acceptor. TRNA contacts are provided by Y64, N66, and N112.

This sequence belongs to the PTH family. As to quaternary structure, monomer.

Its subcellular location is the cytoplasm. It catalyses the reaction an N-acyl-L-alpha-aminoacyl-tRNA + H2O = an N-acyl-L-amino acid + a tRNA + H(+). Hydrolyzes ribosome-free peptidyl-tRNAs (with 1 or more amino acids incorporated), which drop off the ribosome during protein synthesis, or as a result of ribosome stalling. Functionally, catalyzes the release of premature peptidyl moieties from peptidyl-tRNA molecules trapped in stalled 50S ribosomal subunits, and thus maintains levels of free tRNAs and 50S ribosomes. This Chlorobium chlorochromatii (strain CaD3) protein is Peptidyl-tRNA hydrolase.